A 380-amino-acid chain; its full sequence is Cytochrome b (380 aa).

A run of 4 helical transmembrane segments spans residues F33–M53, W77–I98, W113–L133, and F178–I198. Residues H83 and H97 each contribute to the heme b site. Positions 182 and 196 each coordinate heme b. H201 is an a ubiquinone binding site. A run of 4 helical transmembrane segments spans residues Y226 to S246, L288 to H308, F320 to G340, and F347 to P367.

The protein belongs to the cytochrome b family. The cytochrome bc1 complex contains 3 respiratory subunits (MT-CYB, CYC1 and UQCRFS1), 2 core proteins (UQCRC1 and UQCRC2) and probably 6 low-molecular weight proteins. It depends on heme b as a cofactor.

It localises to the mitochondrion inner membrane. Functionally, component of the ubiquinol-cytochrome c reductase complex (complex III or cytochrome b-c1 complex) that is part of the mitochondrial respiratory chain. The b-c1 complex mediates electron transfer from ubiquinol to cytochrome c. Contributes to the generation of a proton gradient across the mitochondrial membrane that is then used for ATP synthesis. This is Cytochrome b (mt-cyb) from Astronotus ocellatus (Oscar).